We begin with the raw amino-acid sequence, 223 residues long: Uracil-DNA glycosylase (223 aa).

Aspartate 61 serves as the catalytic Proton acceptor.

Belongs to the uracil-DNA glycosylase (UDG) superfamily. UNG family.

The protein localises to the cytoplasm. It carries out the reaction Hydrolyzes single-stranded DNA or mismatched double-stranded DNA and polynucleotides, releasing free uracil.. In terms of biological role, excises uracil residues from the DNA which can arise as a result of misincorporation of dUMP residues by DNA polymerase or due to deamination of cytosine. This is Uracil-DNA glycosylase from Haemophilus ducreyi (strain 35000HP / ATCC 700724).